A 206-amino-acid polypeptide reads, in one-letter code: Phosphoribosyl-dephospho-CoA transferase (206 aa).

Catalysis depends on residues aspartate 131 and aspartate 133.

The protein belongs to the MdcG family.

The enzyme catalyses apo-[malonate decarboxylase ACP] + 2'-(5''-triphospho-alpha-D-ribosyl)-3'-dephospho-CoA = holo-[malonate decarboxylase ACP] + diphosphate. In terms of biological role, transfers 2'-(5-triphosphoribosyl)-3'-dephosphocoenzyme-A to the apo-[acyl-carrier-protein] of the malonate decarboxylase to yield holo-[acyl-carrier-protein]. The sequence is that of Phosphoribosyl-dephospho-CoA transferase from Pseudomonas fluorescens (strain Pf0-1).